Here is a 293-residue protein sequence, read N- to C-terminus: Probable metal transport system membrane protein CT_417 (293 aa).

A run of 7 helical transmembrane segments spans residues 18–38, 41–61, 68–88, 101–121, 135–155, 187–207, and 242–262; these read SLLA…YIVV, IVSI…IALW, LPIS…ICIG, IISM…SKLP, ILWV…FIVA, LLLI…GVIL, and FLGI…IAIL.

It belongs to the ABC-3 integral membrane protein family.

The protein resides in the cell inner membrane. Its function is as follows. Part of an ATP-driven transport system CT_415/CT_416/CT_417 for a metal. The polypeptide is Probable metal transport system membrane protein CT_417 (Chlamydia trachomatis serovar D (strain ATCC VR-885 / DSM 19411 / UW-3/Cx)).